The sequence spans 151 residues: Deoxyuridine 5'-triphosphate nucleotidohydrolase (151 aa).

Substrate-binding positions include 70 to 72, asparagine 83, 87 to 89, and methionine 97; these read RSG and LID.

It belongs to the dUTPase family. Requires Mg(2+) as cofactor.

It carries out the reaction dUTP + H2O = dUMP + diphosphate + H(+). It participates in pyrimidine metabolism; dUMP biosynthesis; dUMP from dCTP (dUTP route): step 2/2. In terms of biological role, this enzyme is involved in nucleotide metabolism: it produces dUMP, the immediate precursor of thymidine nucleotides and it decreases the intracellular concentration of dUTP so that uracil cannot be incorporated into DNA. This Glaesserella parasuis serovar 5 (strain SH0165) (Haemophilus parasuis) protein is Deoxyuridine 5'-triphosphate nucleotidohydrolase.